Consider the following 501-residue polypeptide: Splicing factor 3A subunit 3 (501 aa).

Position 1 is an N-acetylmethionine (methionine 1). Serine 54 and serine 121 each carry phosphoserine. The Nuclear localization signal signature appears at 175 to 179; the sequence is KERKN. Phosphoserine is present on residues serine 295 and serine 299. Basic and acidic residues predominate over residues 343-354; the sequence is ENVQRKQARTGE. The segment at 343-374 is disordered; that stretch reads ENVQRKQARTGEEREEEEEEQISESESEDEEN. Positions 355–374 are enriched in acidic residues; it reads EREEEEEEQISESESEDEEN. Phosphoserine occurs at positions 365, 367, and 369. A Matrin-type zinc finger spans residues 406–437; sequence YNCEICGNYTYRGPKAFQRHFAEWRHAHGMRC. Residue threonine 475 is modified to Phosphothreonine.

This sequence belongs to the SF3A3 family. In terms of assembly, component of the 17S U2 SnRNP complex, a ribonucleoprotein complex that contains small nuclear RNA (snRNA) U2 and a number of specific proteins. Part of the SF3A subcomplex of the 17S U2 SnRNP complex which is composed of three subunits; SF3A3/SAP61, SF3A2/SAP62 and SF3A1/SAP114. SF3A associates with the splicing factor SF3B and a 12S RNA unit to form the mature 17S U2 small nuclear ribonucleoprotein complex (17S U2 snRNP). Identified in the spliceosome 'E' complex, a precursor of the spliceosome 'A' complex. Identified in the spliceosome 'A' and 'B' complexes. Identified in the spliceosome 'C' complex. As to expression, ubiquitous.

Its subcellular location is the nucleus speckle. It is found in the nucleus. In terms of biological role, component of the 17S U2 SnRNP complex of the spliceosome, a large ribonucleoprotein complex that removes introns from transcribed pre-mRNAs. The 17S U2 SnRNP complex (1) directly participates in early spliceosome assembly and (2) mediates recognition of the intron branch site during pre-mRNA splicing by promoting the selection of the pre-mRNA branch-site adenosine, the nucleophile for the first step of splicing. Within the 17S U2 SnRNP complex, SF3A3 is part of the SF3A subcomplex that contributes to the assembly of the 17S U2 snRNP, and the subsequent assembly of the pre-spliceosome 'E' complex and the pre-catalytic spliceosome 'A' complex. Involved in pre-mRNA splicing as a component of pre-catalytic spliceosome 'B' complexes. The protein is Splicing factor 3A subunit 3 (SF3A3) of Homo sapiens (Human).